Here is a 306-residue protein sequence, read N- to C-terminus: 3-methyl-2-oxobutanoate hydroxymethyltransferase (306 aa).

Aspartate 53 and aspartate 96 together coordinate Mg(2+). 3-methyl-2-oxobutanoate-binding positions include 53–54, aspartate 96, and lysine 126; that span reads DS. Glutamate 128 contacts Mg(2+). The active-site Proton acceptor is the glutamate 195.

Belongs to the PanB family. In terms of assembly, homodecamer; pentamer of dimers. Mg(2+) is required as a cofactor.

The protein resides in the cytoplasm. It catalyses the reaction 3-methyl-2-oxobutanoate + (6R)-5,10-methylene-5,6,7,8-tetrahydrofolate + H2O = 2-dehydropantoate + (6S)-5,6,7,8-tetrahydrofolate. It participates in cofactor biosynthesis; (R)-pantothenate biosynthesis; (R)-pantoate from 3-methyl-2-oxobutanoate: step 1/2. Functionally, catalyzes the reversible reaction in which hydroxymethyl group from 5,10-methylenetetrahydrofolate is transferred onto alpha-ketoisovalerate to form ketopantoate. This Anaeromyxobacter dehalogenans (strain 2CP-1 / ATCC BAA-258) protein is 3-methyl-2-oxobutanoate hydroxymethyltransferase.